A 252-amino-acid chain; its full sequence is 3-dehydroquinate dehydratase (252 aa).

3-dehydroquinate contacts are provided by residues Ser-21, 46–48 (EWR), and Arg-82. His-143 acts as the Proton donor/acceptor in catalysis. The Schiff-base intermediate with substrate role is filled by Lys-170. 3-dehydroquinate is bound by residues Arg-213, Ser-232, and Gln-236.

This sequence belongs to the type-I 3-dehydroquinase family. Homodimer.

It catalyses the reaction 3-dehydroquinate = 3-dehydroshikimate + H2O. Its pathway is metabolic intermediate biosynthesis; chorismate biosynthesis; chorismate from D-erythrose 4-phosphate and phosphoenolpyruvate: step 3/7. Functionally, involved in the third step of the chorismate pathway, which leads to the biosynthesis of aromatic amino acids. Catalyzes the cis-dehydration of 3-dehydroquinate (DHQ) and introduces the first double bond of the aromatic ring to yield 3-dehydroshikimate. This chain is 3-dehydroquinate dehydratase, found in Salmonella dublin (strain CT_02021853).